Here is a 313-residue protein sequence, read N- to C-terminus: Formimidoylglutamase (313 aa).

Mn(2+) is bound by residues H130, D155, H157, D159, D241, and D243.

It belongs to the arginase family. Requires Mn(2+) as cofactor.

The catalysed reaction is N-formimidoyl-L-glutamate + H2O = formamide + L-glutamate. It participates in amino-acid degradation; L-histidine degradation into L-glutamate; L-glutamate from N-formimidoyl-L-glutamate (hydrolase route): step 1/1. Its function is as follows. Catalyzes the conversion of N-formimidoyl-L-glutamate to L-glutamate and formamide. The chain is Formimidoylglutamase from Salmonella paratyphi B (strain ATCC BAA-1250 / SPB7).